The following is a 296-amino-acid chain: Probable AP endonuclease (296 aa).

Cysteine 16 and cysteine 20 are joined by a disulfide. Zn(2+) contacts are provided by histidine 78, histidine 115, glutamate 142, histidine 182, histidine 218, aspartate 231, histidine 233, and glutamate 271.

This sequence belongs to the AP endonuclease 2 family. Zn(2+) is required as a cofactor.

It is found in the host nucleus. It localises to the host cytoplasm. Its subcellular location is the virion. In terms of biological role, endonuclease that plays a role in DNA repair. Cleaves phosphodiester bonds on the 5' side of apurinic or apyrimidinic sites (AP sites). In addition to endonuclease activity, the ASFV enzyme has a proofreading 3'-5' exonuclease activity that is considerably more efficient in the elimination of a mismatch than in that of a correctly paired base. Displays 3'-phosphatase and 3'-repair diesterase activities. The single nucleotide gaps generated by the AP endonuclease are filled by the viral AP endonuclease and DNA ligase. The protein is Probable AP endonuclease of Ornithodoros (relapsing fever ticks).